The following is a 310-amino-acid chain: Ribosomal RNA small subunit methyltransferase H (310 aa).

S-adenosyl-L-methionine-binding positions include 35-37 (GGH), Asp-52, Phe-79, Asp-100, and Gln-107.

It belongs to the methyltransferase superfamily. RsmH family.

The protein localises to the cytoplasm. It carries out the reaction cytidine(1402) in 16S rRNA + S-adenosyl-L-methionine = N(4)-methylcytidine(1402) in 16S rRNA + S-adenosyl-L-homocysteine + H(+). Specifically methylates the N4 position of cytidine in position 1402 (C1402) of 16S rRNA. This chain is Ribosomal RNA small subunit methyltransferase H, found in Anaeromyxobacter sp. (strain K).